An 810-amino-acid chain; its full sequence is Janus kinase and microtubule-interacting protein 2 (810 aa).

Coiled-coil stretches lie at residues 13–102, 148–178, and 207–244; these read EALI…EMSR, ERLKLLQEIADLKTAKKQVDEALSNMIQADK, and RRLMDEIKAKDRIIFSLEKELETQTGYVQKLQLQKEAL. The span at 261–274 shows a compositional bias: basic and acidic residues; it reads PKREIPGRAGDGSE. Disordered stretches follow at residues 261-280 and 437-465; these read PKREIPGRAGDGSEHCSSPD and YDEDSMDSETSSMASFRTDRTPATPDDDL. Residues 280-419 are a coiled coil; that stretch reads DLRRNQKRIA…REKLIRRRKH (140 aa). 2 coiled-coil regions span residues 468–597 and 664–808; these read SLAA…RERR and EKWI…SNRK.

Belongs to the JAKMIP family. As to expression, highly expressed in brain, moderately expressed in thymus, spleen and lung, and weakly expressed in kidney, liver and peripheral blood lymphocytes. Also expressed in adrenal and pituitary glands, as well as testis.

The protein localises to the golgi apparatus. The sequence is that of Janus kinase and microtubule-interacting protein 2 (JAKMIP2) from Homo sapiens (Human).